Here is a 312-residue protein sequence, read N- to C-terminus: Coproporphyrin III ferrochelatase (312 aa).

Residues tyrosine 13, arginine 30, 46-47, serine 54, and tyrosine 125 contribute to the Fe-coproporphyrin III site; that span reads RY. 2 residues coordinate Fe(2+): histidine 182 and glutamate 263.

Belongs to the ferrochelatase family.

The protein localises to the cytoplasm. The catalysed reaction is Fe-coproporphyrin III + 2 H(+) = coproporphyrin III + Fe(2+). Its pathway is porphyrin-containing compound metabolism; protoheme biosynthesis. In terms of biological role, involved in coproporphyrin-dependent heme b biosynthesis. Catalyzes the insertion of ferrous iron into coproporphyrin III to form Fe-coproporphyrin III. This is Coproporphyrin III ferrochelatase from Oceanobacillus iheyensis (strain DSM 14371 / CIP 107618 / JCM 11309 / KCTC 3954 / HTE831).